The chain runs to 443 residues: Xaa-Pro dipeptidase (443 aa).

Residues aspartate 246, aspartate 257, histidine 339, glutamate 384, and glutamate 423 each contribute to the Mn(2+) site.

The protein belongs to the peptidase M24B family. Bacterial-type prolidase subfamily. Mn(2+) is required as a cofactor.

It catalyses the reaction Xaa-L-Pro dipeptide + H2O = an L-alpha-amino acid + L-proline. Splits dipeptides with a prolyl residue in the C-terminal position. This Escherichia coli O81 (strain ED1a) protein is Xaa-Pro dipeptidase.